The following is a 344-amino-acid chain: Probable glucan endo-1,3-beta-glucosidase At4g16260 (344 aa).

The signal sequence occupies residues 1-21; that stretch reads MTTLFLLIALFITTILNPTSG. Glutamate 116 acts as the Proton donor in catalysis. Glutamate 257 functions as the Nucleophile in the catalytic mechanism.

This sequence belongs to the glycosyl hydrolase 17 family. As to quaternary structure, (Microbial infection) Interacts with the 30C02 effector protein (AC G3GD54) of the beet cyst nematode Heterodera schachtii. Interaction with the 30C02 effector protein may potentially suppress beta-1,3-glucanase activity and plant defense.

Its subcellular location is the secreted. It carries out the reaction Hydrolysis of (1-&gt;3)-beta-D-glucosidic linkages in (1-&gt;3)-beta-D-glucans.. In terms of biological role, may be involved in plant defense against cyst nematode pathogens. In Arabidopsis thaliana (Mouse-ear cress), this protein is Probable glucan endo-1,3-beta-glucosidase At4g16260.